A 264-amino-acid polypeptide reads, in one-letter code: Phosphonoacetaldehyde hydrolase (264 aa).

The Nucleophile role is filled by D10. Residues D10 and A12 each coordinate Mg(2+). The Schiff-base intermediate with substrate role is filled by K52. Residue D185 coordinates Mg(2+).

Belongs to the HAD-like hydrolase superfamily. PhnX family. In terms of assembly, homodimer. The cofactor is Mg(2+).

The catalysed reaction is phosphonoacetaldehyde + H2O = acetaldehyde + phosphate + H(+). Functionally, involved in phosphonate degradation. This chain is Phosphonoacetaldehyde hydrolase, found in Parabacteroides distasonis (strain ATCC 8503 / DSM 20701 / CIP 104284 / JCM 5825 / NCTC 11152).